An 87-amino-acid chain; its full sequence is UPF0729 protein C18orf32 homolog (87 aa).

It belongs to the UPF0729 family.

The chain is UPF0729 protein C18orf32 homolog from Esox lucius (Northern pike).